Here is a 120-residue protein sequence, read N- to C-terminus: Flagellar protein FliT (120 aa).

Positions methionine 1–isoleucine 50 are required for homodimerization. A fliD binding region spans residues leucine 60–arginine 98.

This sequence belongs to the FliT family. Homodimer. Interacts with FliD and FlhC.

The protein localises to the cytoplasm. Its subcellular location is the cytosol. In terms of biological role, dual-function protein that regulates the transcription of class 2 flagellar operons and that also acts as an export chaperone for the filament-capping protein FliD. As a transcriptional regulator, acts as an anti-FlhDC factor; it directly binds FlhC, thus inhibiting the binding of the FlhC/FlhD complex to class 2 promoters, resulting in decreased expression of class 2 flagellar operons. As a chaperone, effects FliD transition to the membrane by preventing its premature polymerization, and by directing it to the export apparatus. The sequence is that of Flagellar protein FliT from Yersinia pestis (strain Pestoides F).